A 375-amino-acid polypeptide reads, in one-letter code: N5-carboxyaminoimidazole ribonucleotide synthase (375 aa).

Residues R108, K148, G153–Q159, E183–L186, E191, H214, and N268–E269 each bind ATP. Positions K112 to T298 constitute an ATP-grasp domain.

The protein belongs to the PurK/PurT family. As to quaternary structure, homodimer.

It catalyses the reaction 5-amino-1-(5-phospho-beta-D-ribosyl)imidazole + hydrogencarbonate + ATP = 5-carboxyamino-1-(5-phospho-D-ribosyl)imidazole + ADP + phosphate + 2 H(+). It participates in purine metabolism; IMP biosynthesis via de novo pathway; 5-amino-1-(5-phospho-D-ribosyl)imidazole-4-carboxylate from 5-amino-1-(5-phospho-D-ribosyl)imidazole (N5-CAIR route): step 1/2. Catalyzes the ATP-dependent conversion of 5-aminoimidazole ribonucleotide (AIR) and HCO(3)(-) to N5-carboxyaminoimidazole ribonucleotide (N5-CAIR). The polypeptide is N5-carboxyaminoimidazole ribonucleotide synthase (Staphylococcus saprophyticus subsp. saprophyticus (strain ATCC 15305 / DSM 20229 / NCIMB 8711 / NCTC 7292 / S-41)).